The sequence spans 198 residues: Superoxide dismutase [Fe] (198 aa).

4 residues coordinate Fe cation: His27, His74, Asp158, and His162.

This sequence belongs to the iron/manganese superoxide dismutase family. In terms of assembly, homodimer. Requires Fe cation as cofactor.

Its subcellular location is the cytoplasm. It carries out the reaction 2 superoxide + 2 H(+) = H2O2 + O2. In terms of biological role, destroys superoxide anion radicals which are normally produced within the cells and which are toxic to biological systems. The protein is Superoxide dismutase [Fe] (SODB) of Plasmodium falciparum (isolate 3D7).